Reading from the N-terminus, the 320-residue chain is UPF0053 protein in cps region (320 aa).

A helical transmembrane segment spans residues 4 to 24 (CLSFLLMIGFSLIAEGFSFII). 2 CBS domains span residues 121–183 (MTSR…PLDL) and 186–244 (LVRQ…PNEV).

The protein belongs to the UPF0053 family.

Its subcellular location is the cell membrane. This is UPF0053 protein in cps region from Klebsiella pneumoniae.